Here is a 413-residue protein sequence, read N- to C-terminus: ORC1-type DNA replication protein 2 (413 aa).

Residues Thr-70–Ala-74, Tyr-217, and Arg-229 contribute to the ATP site.

This sequence belongs to the CDC6/cdc18 family. In terms of assembly, monomer. Interacts with Cdc6-3, MCM and PolB1. In terms of processing, autophosphorylated in vitro.

In terms of biological role, involved in regulation of DNA replication. May play essential roles in origin recognition and cell cycle control of replication. Binds both single-stranded and double-stranded DNA, with a preference for molecules that contain a bubble, a fork, or a tail. Has a weak ATPase activity. Stimulates the binding of the MCM helicase to the origin DNA, but strongly inhibits ATPase and DNA helicase activities of MCM. Also regulates the DNA polymerase and the nuclease activities of PolB1. The protein is ORC1-type DNA replication protein 2 (cdc6-2) of Saccharolobus solfataricus (strain ATCC 35092 / DSM 1617 / JCM 11322 / P2) (Sulfolobus solfataricus).